The primary structure comprises 229 residues: Potassium/proton antiporter CemA (229 aa).

Transmembrane regions (helical) follow at residues 6–26, 107–127, and 189–209; these read AFIP…ISLC, ILHF…SFWG, and ILSG…KYWI.

The protein belongs to the CemA family.

It localises to the plastid. It is found in the chloroplast inner membrane. The enzyme catalyses K(+)(in) + H(+)(out) = K(+)(out) + H(+)(in). Contributes to K(+)/H(+) antiport activity by supporting proton efflux to control proton extrusion and homeostasis in chloroplasts in a light-dependent manner to modulate photosynthesis. Prevents excessive induction of non-photochemical quenching (NPQ) under continuous-light conditions. Indirectly promotes efficient inorganic carbon uptake into chloroplasts. This Olimarabidopsis pumila (Dwarf rocket) protein is Potassium/proton antiporter CemA.